Reading from the N-terminus, the 407-residue chain is Argininosuccinate synthase (407 aa).

ATP-binding positions include 12–20 and Ala39; that span reads AYSGGLDTS. L-citrulline-binding residues include Tyr92 and Ser97. Gly122 serves as a coordination point for ATP. L-aspartate-binding residues include Thr124, Asn128, and Asp129. Residue Asn128 coordinates L-citrulline. Positions 132, 182, 191, 267, and 279 each coordinate L-citrulline.

Belongs to the argininosuccinate synthase family. Type 1 subfamily. As to quaternary structure, homotetramer.

It is found in the cytoplasm. The catalysed reaction is L-citrulline + L-aspartate + ATP = 2-(N(omega)-L-arginino)succinate + AMP + diphosphate + H(+). The protein operates within amino-acid biosynthesis; L-arginine biosynthesis; L-arginine from L-ornithine and carbamoyl phosphate: step 2/3. The chain is Argininosuccinate synthase from Campylobacter fetus subsp. fetus (strain 82-40).